The following is a 204-amino-acid chain: Ribosome maturation factor RimP (204 aa).

This sequence belongs to the RimP family.

It is found in the cytoplasm. Functionally, required for maturation of 30S ribosomal subunits. This chain is Ribosome maturation factor RimP, found in Allorhizobium ampelinum (strain ATCC BAA-846 / DSM 112012 / S4) (Agrobacterium vitis (strain S4)).